Consider the following 555-residue polypeptide: Glucose-6-phosphate isomerase (555 aa).

Residue Glu360 is the Proton donor of the active site. Active-site residues include His391 and Lys519.

Belongs to the GPI family.

It is found in the cytoplasm. It carries out the reaction alpha-D-glucose 6-phosphate = beta-D-fructose 6-phosphate. It participates in carbohydrate biosynthesis; gluconeogenesis. The protein operates within carbohydrate degradation; glycolysis; D-glyceraldehyde 3-phosphate and glycerone phosphate from D-glucose: step 2/4. Functionally, catalyzes the reversible isomerization of glucose-6-phosphate to fructose-6-phosphate. This Acinetobacter baumannii (strain AB307-0294) protein is Glucose-6-phosphate isomerase.